Reading from the N-terminus, the 571-residue chain is Membrane protein insertase YidC (571 aa).

The helical transmembrane segment at 4 to 24 (TRVFLIFAWLMVAVLLWMEWS) threads the bilayer. Positions 29–78 (APTPAPTTTSAPAAAQSVPGANPGAIPSAQVPGAPGQAAAQAQASATPAS) are disordered. Composition is skewed to low complexity over residues 34–43 (PTTTSAPAAA) and 55–78 (PSAQVPGAPGQAAAQAQASATPAS). Helical transmembrane passes span 369 to 389 (LVGNWGWAIVGLVVLLKLVLY), 440 to 460 (GGCLPILIQMPIFFALYWVLV), 483 to 503 (YFILPVINVAVMWFTQKLTPA), and 518 to 538 (PLVFGVMMAFMPSGLVLYWVV).

It belongs to the OXA1/ALB3/YidC family. Type 1 subfamily. As to quaternary structure, interacts with the Sec translocase complex via SecD. Specifically interacts with transmembrane segments of nascent integral membrane proteins during membrane integration.

It is found in the cell inner membrane. Required for the insertion and/or proper folding and/or complex formation of integral membrane proteins into the membrane. Involved in integration of membrane proteins that insert both dependently and independently of the Sec translocase complex, as well as at least some lipoproteins. Aids folding of multispanning membrane proteins. This is Membrane protein insertase YidC from Stenotrophomonas maltophilia (strain K279a).